The following is a 352-amino-acid chain: Guanine nucleotide-binding protein alpha-7 subunit (352 aa).

Gly-2 carries the N-myristoyl glycine lipid modification. A lipid anchor (S-palmitoyl cysteine) is attached at Cys-4. The region spanning Arg-32–Cys-352 is the G-alpha domain. Positions Lys-35–Thr-48 are G1 motif. GTP-binding positions include Gly-40 to Ser-47, Leu-174 to Thr-180, Asp-199 to Gln-203, Asn-268 to Asp-271, and Ala-324. Mg(2+)-binding residues include Ser-47 and Thr-180. The segment at Asp-172–Thr-180 is G2 motif. Residues Phe-195 to Arg-204 form a G3 motif region. Residues Ile-264 to Asp-271 are G4 motif. Positions Thr-322–Thr-327 are G5 motif.

The protein belongs to the G-alpha family. G(i/o/t/z) subfamily. In terms of assembly, g proteins are composed of 3 units; alpha, beta and gamma. The alpha chain contains the guanine nucleotide binding site.

Functionally, guanine nucleotide-binding proteins (G proteins) are involved as modulators or transducers in various transmembrane signaling systems. The chain is Guanine nucleotide-binding protein alpha-7 subunit (gpa-7) from Caenorhabditis briggsae.